The following is a 640-amino-acid chain: Chaperone protein DnaK (640 aa).

Residue threonine 199 is modified to Phosphothreonine; by autocatalysis. The interval 603-640 (YTQQAEEPQPQKEEGKAAEEDVVDAEFEEVKEDKNKAS) is disordered. Positions 611-621 (QPQKEEGKAAE) are enriched in basic and acidic residues. Acidic residues predominate over residues 622-632 (EDVVDAEFEEV).

The protein belongs to the heat shock protein 70 family.

Acts as a chaperone. This chain is Chaperone protein DnaK, found in Nitrosococcus oceani (strain ATCC 19707 / BCRC 17464 / JCM 30415 / NCIMB 11848 / C-107).